An 86-amino-acid polypeptide reads, in one-letter code: Small ribosomal subunit protein uS17 (86 aa).

Belongs to the universal ribosomal protein uS17 family. Part of the 30S ribosomal subunit.

One of the primary rRNA binding proteins, it binds specifically to the 5'-end of 16S ribosomal RNA. This is Small ribosomal subunit protein uS17 from Rhizorhabdus wittichii (strain DSM 6014 / CCUG 31198 / JCM 15750 / NBRC 105917 / EY 4224 / RW1) (Sphingomonas wittichii).